An 808-amino-acid polypeptide reads, in one-letter code: Phenylalanine--tRNA ligase beta subunit (808 aa).

A tRNA-binding domain is found at 40–155; it reads NQGATGVVVG…DDVEIGSDAL (116 aa). The B5 domain occupies 409-484; sequence IEEPVVSLNL…RLYGYDNIPT (76 aa). 4 residues coordinate Mg(2+): D462, D468, E471, and E472. The region spanning 714–807 is the FDX-ACB domain; that stretch reads PRFPAISRDI…LEASTGAVLR (94 aa).

Belongs to the phenylalanyl-tRNA synthetase beta subunit family. Type 1 subfamily. As to quaternary structure, tetramer of two alpha and two beta subunits. It depends on Mg(2+) as a cofactor.

It localises to the cytoplasm. The enzyme catalyses tRNA(Phe) + L-phenylalanine + ATP = L-phenylalanyl-tRNA(Phe) + AMP + diphosphate + H(+). This chain is Phenylalanine--tRNA ligase beta subunit (pheT), found in Halalkalibacterium halodurans (strain ATCC BAA-125 / DSM 18197 / FERM 7344 / JCM 9153 / C-125) (Bacillus halodurans).